Consider the following 202-residue polypeptide: MTRFVVTGTDTGIGKTIFSASLARATGTPYWKPVQSGLEEETDSEIVARLAGVPVRPEAYRLVTPASPHIAAEIDGVAIDIERLTPPPGELIVEGAGGALVPVTRRTLYAELFARWQVPVIVCARTSLGTINHSLLTIEALKRRDVPIHGVVFIGDAVEDSEAIIADVSGVRRLGRLPVVAPLTSENLAAAFGANFDIADFR.

Residue 12–17 (GIGKTI) participates in ATP binding. Threonine 16 is a binding site for Mg(2+). The active site involves lysine 32. Serine 36 contacts substrate. ATP-binding positions include aspartate 43, 94 to 97 (EGAG), and 178 to 180 (PVV). Aspartate 43 and glutamate 94 together coordinate Mg(2+).

The protein belongs to the dethiobiotin synthetase family. In terms of assembly, homodimer. The cofactor is Mg(2+).

Its subcellular location is the cytoplasm. The enzyme catalyses (7R,8S)-7,8-diammoniononanoate + CO2 + ATP = (4R,5S)-dethiobiotin + ADP + phosphate + 3 H(+). Its pathway is cofactor biosynthesis; biotin biosynthesis; biotin from 7,8-diaminononanoate: step 1/2. Catalyzes a mechanistically unusual reaction, the ATP-dependent insertion of CO2 between the N7 and N8 nitrogen atoms of 7,8-diaminopelargonic acid (DAPA, also called 7,8-diammoniononanoate) to form a ureido ring. The polypeptide is ATP-dependent dethiobiotin synthetase BioD (Sphingopyxis alaskensis (strain DSM 13593 / LMG 18877 / RB2256) (Sphingomonas alaskensis)).